Here is an 81-residue protein sequence, read N- to C-terminus: Small ribosomal subunit protein bS16 (81 aa).

Belongs to the bacterial ribosomal protein bS16 family.

The sequence is that of Small ribosomal subunit protein bS16 from Clostridium beijerinckii (strain ATCC 51743 / NCIMB 8052) (Clostridium acetobutylicum).